Here is a 51-residue protein sequence, read N- to C-terminus: uncharacterized protein (51 aa).

The segment at 1–51 is disordered; it reads MKRKAEVNEAIKNNNTPTESMDPNSYKTQYHDDPNFRGANRNSKQGQQGGM. Composition is skewed to polar residues over residues 11–28 and 40–51; these read IKNN…SYKT and NRNSKQGQQGGM.

This is an uncharacterized protein from Bacillus subtilis (strain 168).